A 455-amino-acid chain; its full sequence is Golgi pH regulator A (455 aa).

Transmembrane regions (helical) follow at residues 5-25 (IDSS…WLFF), 46-66 (VTFA…LGVL), 79-99 (LCVI…YFIV), 114-134 (CLLW…FPIL), and 150-170 (VGVI…VNCP). 2 N-linked (GlcNAc...) asparagine glycosylation sites follow: Asn180 and Asn243. 4 helical membrane-spanning segments follow: residues 290–310 (GYFF…NIVF), 343–363 (ISFI…LITL), 378–398 (VIVL…VLLI), and 425–445 (WFDV…YLAH).

Belongs to the Golgi pH regulator (TC 1.A.38) family. As to quaternary structure, homotrimer. Interacts with RABL3; the interaction stabilizes GPR89A. As to expression, ubiquitous.

Its subcellular location is the golgi apparatus membrane. It carries out the reaction iodide(out) = iodide(in). The enzyme catalyses chloride(in) = chloride(out). It catalyses the reaction bromide(in) = bromide(out). The catalysed reaction is fluoride(in) = fluoride(out). Functionally, voltage-gated channel that enables the transfer of monoatomic anions such as iodide, chloride, bromide and fluoride which may function in counter-ion conductance and participates in Golgi acidification. Plays a role in lymphocyte development, probably by acting as a RABL3 effector in hematopoietic cells. The chain is Golgi pH regulator A from Homo sapiens (Human).